Here is a 254-residue protein sequence, read N- to C-terminus: Imidazole glycerol phosphate synthase subunit HisF (254 aa).

Catalysis depends on residues aspartate 11 and aspartate 130.

The protein belongs to the HisA/HisF family. As to quaternary structure, heterodimer of HisH and HisF.

It localises to the cytoplasm. It carries out the reaction 5-[(5-phospho-1-deoxy-D-ribulos-1-ylimino)methylamino]-1-(5-phospho-beta-D-ribosyl)imidazole-4-carboxamide + L-glutamine = D-erythro-1-(imidazol-4-yl)glycerol 3-phosphate + 5-amino-1-(5-phospho-beta-D-ribosyl)imidazole-4-carboxamide + L-glutamate + H(+). The protein operates within amino-acid biosynthesis; L-histidine biosynthesis; L-histidine from 5-phospho-alpha-D-ribose 1-diphosphate: step 5/9. In terms of biological role, IGPS catalyzes the conversion of PRFAR and glutamine to IGP, AICAR and glutamate. The HisF subunit catalyzes the cyclization activity that produces IGP and AICAR from PRFAR using the ammonia provided by the HisH subunit. The protein is Imidazole glycerol phosphate synthase subunit HisF of Solibacter usitatus (strain Ellin6076).